The chain runs to 192 residues: Threonylcarbamoyl-AMP synthase (192 aa).

The YrdC-like domain occupies 5–192 (TTSVAEAAHC…DATTGRVIRD (188 aa)).

It belongs to the SUA5 family. TsaC subfamily.

The protein resides in the cytoplasm. The enzyme catalyses L-threonine + hydrogencarbonate + ATP = L-threonylcarbamoyladenylate + diphosphate + H2O. Its function is as follows. Required for the formation of a threonylcarbamoyl group on adenosine at position 37 (t(6)A37) in tRNAs that read codons beginning with adenine. Catalyzes the conversion of L-threonine, HCO(3)(-)/CO(2) and ATP to give threonylcarbamoyl-AMP (TC-AMP) as the acyladenylate intermediate, with the release of diphosphate. The sequence is that of Threonylcarbamoyl-AMP synthase from Acinetobacter baylyi (strain ATCC 33305 / BD413 / ADP1).